Consider the following 388-residue polypeptide: Protein TsgA homolog (388 aa).

12 helical membrane passes run 11–31 (WISF…GMIM), 50–70 (TFLN…IEII), 77–97 (IFSF…NSIF), 101–121 (INMF…TFII), 133–153 (LLLL…IVTA), 160–180 (IIWY…FLLT), 206–226 (VFLL…FISW), 244–264 (SLVS…SFII), 268–288 (NLYR…YCFI), 298–318 (YIII…ITLA), 332–352 (LILL…SPIV), and 360–380 (TLIS…LIYF).

The protein belongs to the major facilitator superfamily. TsgA family.

It localises to the cell membrane. This chain is Protein TsgA homolog, found in Buchnera aphidicola subsp. Acyrthosiphon pisum (strain 5A).